Reading from the N-terminus, the 237-residue chain is tRNA1(Val) (adenine(37)-N6)-methyltransferase (237 aa).

Belongs to the methyltransferase superfamily. tRNA (adenine-N(6)-)-methyltransferase family.

Its subcellular location is the cytoplasm. The enzyme catalyses adenosine(37) in tRNA1(Val) + S-adenosyl-L-methionine = N(6)-methyladenosine(37) in tRNA1(Val) + S-adenosyl-L-homocysteine + H(+). Specifically methylates the adenine in position 37 of tRNA(1)(Val) (anticodon cmo5UAC). The sequence is that of tRNA1(Val) (adenine(37)-N6)-methyltransferase from Tolumonas auensis (strain DSM 9187 / NBRC 110442 / TA 4).